A 394-amino-acid polypeptide reads, in one-letter code: Actin-related protein 2 (394 aa).

At Met1 the chain carries N-acetylmethionine. ATP-binding positions include 160–162 and 214–218; these read GDG and RMIKE. Lys299 bears the N6-acetyllysine mark. 305-310 serves as a coordination point for ATP; that stretch reads GGSTMY. Lys322 bears the N6-acetyllysine mark.

The protein belongs to the actin family. ARP2 subfamily. In terms of assembly, component of the Arp2/3 complex composed of ACTR2/ARP2, ACTR3/ARP3, ARPC1B/p41-ARC, ARPC2/p34-ARC, ARPC3/p21-ARC, ARPC4/p20-ARC and ARPC5/p16-ARC.

The protein resides in the cytoplasm. It is found in the cytoskeleton. The protein localises to the cell projection. Its subcellular location is the nucleus. Its function is as follows. ATP-binding component of the Arp2/3 complex, a multiprotein complex that mediates actin polymerization upon stimulation by nucleation-promoting factor (NPF). The Arp2/3 complex mediates the formation of branched actin networks in the cytoplasm, providing the force for cell motility. Seems to contact the pointed end of the daughter actin filament. In addition to its role in the cytoplasmic cytoskeleton, the Arp2/3 complex also promotes actin polymerization in the nucleus, thereby regulating gene transcription and repair of damaged DNA. The Arp2/3 complex promotes homologous recombination (HR) repair in response to DNA damage by promoting nuclear actin polymerization, leading to drive motility of double-strand breaks (DSBs). This Rattus norvegicus (Rat) protein is Actin-related protein 2 (Actr2).